The primary structure comprises 179 residues: Large ribosomal subunit protein uL5 (179 aa).

The protein belongs to the universal ribosomal protein uL5 family. In terms of assembly, part of the 50S ribosomal subunit; part of the 5S rRNA/L5/L18/L25 subcomplex. Contacts the 5S rRNA and the P site tRNA. Forms a bridge to the 30S subunit in the 70S ribosome.

Functionally, this is one of the proteins that bind and probably mediate the attachment of the 5S RNA into the large ribosomal subunit, where it forms part of the central protuberance. In the 70S ribosome it contacts protein S13 of the 30S subunit (bridge B1b), connecting the 2 subunits; this bridge is implicated in subunit movement. Contacts the P site tRNA; the 5S rRNA and some of its associated proteins might help stabilize positioning of ribosome-bound tRNAs. The chain is Large ribosomal subunit protein uL5 from Xylella fastidiosa (strain 9a5c).